Reading from the N-terminus, the 224-residue chain is Dickkopf-related protein 4 (224 aa).

The signal sequence occupies residues 1–18 (MVAAVLLGLSWLCSPLGA). A DKK-type Cys-1 region spans residues 41–90 (CLSDTDCNTRKFCLQPRDEKPFCATCRGLRRRCQRDAMCCPGTLCVNDVC). The disordered stretch occupies residues 109 to 139 (GTHAEGTTGHPVQENQPKRKPSIKKSQGRKG). Basic residues predominate over residues 126–136 (KRKPSIKKSQG). 5 cysteine pairs are disulfide-bonded: Cys-145–Cys-157, Cys-151–Cys-166, Cys-156–Cys-194, Cys-176–Cys-202, and Cys-196–Cys-218. Positions 145–218 (CLRTFDCGPG…NRQHARLRVC (74 aa)) are DKK-type Cys-2.

This sequence belongs to the dickkopf family. In terms of assembly, interacts with LRP5 and LRP6. In terms of processing, appears to be not glycosylated. Can be proteolytically processed by a furin-like protease. Expressed in cerebellum, T-cells, esophagus and lung.

Its subcellular location is the secreted. Functionally, antagonizes canonical Wnt signaling by inhibiting LRP5/6 interaction with Wnt and by forming a ternary complex with the transmembrane protein KREMEN that promotes internalization of LRP5/6. DKKs play an important role in vertebrate development, where they locally inhibit Wnt regulated processes such as antero-posterior axial patterning, limb development, somitogenesis and eye formation. In the adult, Dkks are implicated in bone formation and bone disease, cancer and Alzheimer disease. In Homo sapiens (Human), this protein is Dickkopf-related protein 4 (DKK4).